The sequence spans 317 residues: tRNA N6-adenosine threonylcarbamoyltransferase (317 aa).

The Fe cation site is built by H110 and H114. Residues 132 to 136 (VVSGG), D165, G178, D182, and N271 each bind substrate. D300 lines the Fe cation pocket.

It belongs to the KAE1 / TsaD family. Requires Fe(2+) as cofactor.

It localises to the cytoplasm. The catalysed reaction is L-threonylcarbamoyladenylate + adenosine(37) in tRNA = N(6)-L-threonylcarbamoyladenosine(37) in tRNA + AMP + H(+). In terms of biological role, required for the formation of a threonylcarbamoyl group on adenosine at position 37 (t(6)A37) in tRNAs that read codons beginning with adenine. Is involved in the transfer of the threonylcarbamoyl moiety of threonylcarbamoyl-AMP (TC-AMP) to the N6 group of A37, together with TsaE and TsaB. TsaD likely plays a direct catalytic role in this reaction. This Mesoplasma florum (strain ATCC 33453 / NBRC 100688 / NCTC 11704 / L1) (Acholeplasma florum) protein is tRNA N6-adenosine threonylcarbamoyltransferase.